A 191-amino-acid polypeptide reads, in one-letter code: Adenylate kinase (191 aa).

An ATP-binding site is contributed by 12-17 (GSGKTT). The tract at residues 34 to 63 (STGDLLRAESAKKTERGLLIEKFTSQGELV) is NMP. AMP is bound by residues T35, R40, 61 to 63 (ELV), 88 to 91 (GYPR), and Q95. Residues 130–136 (GRSRGAD) are LID. R131 provides a ligand contact to ATP. AMP-binding residues include R133 and R145. R173 contributes to the ATP binding site.

This sequence belongs to the adenylate kinase family. In terms of assembly, monomer.

It localises to the cytoplasm. It carries out the reaction AMP + ATP = 2 ADP. Its pathway is purine metabolism; AMP biosynthesis via salvage pathway; AMP from ADP: step 1/1. Catalyzes the reversible transfer of the terminal phosphate group between ATP and AMP. Plays an important role in cellular energy homeostasis and in adenine nucleotide metabolism. The sequence is that of Adenylate kinase from Helicobacter pylori (strain Shi470).